Here is a 158-residue protein sequence, read N- to C-terminus: Urease accessory protein UreE (158 aa).

Belongs to the UreE family.

It is found in the cytoplasm. Involved in urease metallocenter assembly. Binds nickel. Probably functions as a nickel donor during metallocenter assembly. This chain is Urease accessory protein UreE, found in Corynebacterium urealyticum (strain ATCC 43042 / DSM 7109).